The sequence spans 592 residues: MEDPDIKRCKLSCVATVDDVIEQVMTYITDPKDRDSASLVCRRWFKIDSETREHVTMALCYTATPDRLSRRFPNLRSLKLKGKPRAAMFNLIPENWGGYVTPWVTEISNNLRQLKSVHFRRMIVSDLDLDRLAKARADDLETLKLDKCSGFTTDGLLSIVTHCRKIKTLLMEESSFSEKDGKWLHELAQHNTSLEVLNFYMTEFAKISPKDLETIARNCRSLVSVKVGDFEILELVGFFKAAANLEEFCGGSLNEDIGMPEKYMNLVFPRKLCRLGLSYMGPNEMPILFPFAAQIRKLDLLYALLETEDHCTLIQKCPNLEVLETRNVIGDRGLEVLAQYCKQLKRLRIERGADEQGMEDEEGLVSQRGLIALAQGCQELEYMAVYVSDITNESLESIGTYLKNLCDFRLVLLDREERITDLPLDNGVRSLLIGCKKLRRFAFYLRQGGLTDLGLSYIGQYSPNVRWMLLGYVGESDEGLMEFSRGCPNLQKLEMRGCCFSERAIAAAVTKLPSLRYLWVQGYRASMTGQDLMQMARPYWNIELIPSRRVPEVNQQGEIREMEHPAHILAYYSLAGQRTDCPTTVRVLKEPI.

Positions 16–57 (TVDDVIEQVMTYITDPKDRDSASLVCRRWFKIDSETREHVTM) constitute an F-box domain. LRR repeat units follow at residues 58 to 82 (ALCYTATPDRLSRRFPNLRSLKLKG), 83 to 102 (KPRAAMFNLIPENWGGYVTP), 103 to 120 (WVTEISNNLRQLKSVHFR), 121 to 154 (RMIVSDLDLDRLAKARADDLETLKLDKCSGFTTD), 155 to 182 (GLLSIVTHCRKIKTLLMEESSFSEKDGK), 183 to 210 (WLHELAQHNTSLEVLNFYMTEFAKISPK), 211 to 236 (DLETIARNCRSLVSVKVGDFEILELV), 237 to 264 (GFFKAAANLEEFCGGSLNEDIGMPEKYM), 265 to 283 (NLVFPRKLCRLGLSYMGPN), 284 to 308 (EMPILFPFAAQIRKLDLLYALLETE), 309 to 332 (DHCTLIQKCPNLEVLETRNVIGDR), 333 to 368 (GLEVLAQYCKQLKRLRIERGADEQGMEDEEGLVSQR), 369 to 393 (GLIALAQGCQELEYMAVYVSDITNE), 394 to 426 (SLESIGTYLKNLCDFRLVLLDREERITDLPLDN), 427 to 456 (GVRSLLIGCKKLRRFAFYLRQGGLTDLGLS), 457 to 478 (YIGQYSPNVRWMLLGYVGESDE), 479 to 500 (GLMEFSRGCPNLQKLEMRGCCF), and 501 to 524 (SERAIAAAVTKLPSLRYLWVQGYR). Position 85 (arginine 85) interacts with jasmonate. Jasmonate contacts are provided by arginine 348, tyrosine 386, and arginine 409. Residue arginine 496 participates in jasmonate binding.

As to quaternary structure, component of SCF(COI1) E3 ubiquitin ligase complexes at least composed of ASK1 or ASK2, CUL1, RBX1A or RBX1B and COI1. Interacts with ASK1 and ASK2, but separately. Also binds to ASK11 and ASK12. Interacts with RBCS-1B and HDA6. SCF complexes interact with the COP9 signalosome (CSN). Interacts with TIFY10A.

The protein operates within protein modification; protein ubiquitination. Required for jasmonate-regulated plant fertility and defense processes, and for coronatine and/or other elicitors perceptions/responses. Seems to not be required for meiosis. Required for the regulation of some genes induced by wounding, but not for all. Component of SCF(COI1) E3 ubiquitin ligase complexes, which may mediate the ubiquitination and subsequent proteasomal degradation of target proteins (probably including the ribulose bisphosphate carboxylase small chain 1B RBCS-1B and the histone deacetylase HDA6). These SCF complexes play crucial roles in regulating response to jasmonate, and their interactions with the COP9 signalosome (CSN) appear to be important for their activity. Interacts with TIFY10A and inositol pentakisphosphate to form a high-affinity jasmonates coreceptor. Involved in the regulation of plant gene expression during plant-pathogen interactions with Pseudomonas syringae and Alternaria brassicicola. The sequence is that of Coronatine-insensitive protein 1 (COI1) from Arabidopsis thaliana (Mouse-ear cress).